The primary structure comprises 141 residues: MLTADDKKLIQQIWEKVGSHLEDFGAEALERMFITYPQTKTYFPHFDLHPGSEQIRGHGKKVANALGNAVKSLDNLSQALSELSNLHAYNLRVDPVNFKLLSQCFQVVLAVHMGKDYTPEVHAAYDKFLTAVAAVLAEKYR.

The 141-residue stretch at 1–141 (MLTADDKKLI…VAAVLAEKYR (141 aa)) folds into the Globin domain. Residues His-58 and His-87 each coordinate heme b.

The protein belongs to the globin family. As to quaternary structure, heterotetramer of two alpha-D chains and two beta chains. In terms of tissue distribution, red blood cells.

Involved in oxygen transport from the lung to the various peripheral tissues. The polypeptide is Hemoglobin subunit alpha-D (HBAD) (Struthio camelus (Common ostrich)).